Consider the following 206-residue polypeptide: Charged multivesicular body protein 6 (206 aa).

Gly2 carries N-myristoyl glycine lipidation. Residues 11-103 (TRVTEQDRAV…AQIEMKVIEG (93 aa)) adopt a coiled-coil conformation. A disordered region spans residues 167–206 (EADLELPEVPGEELPEVPEQEPVREKERVKKKPEREMVAV). Residues 168-185 (ADLELPEVPGEELPEVPE) are compositionally biased toward acidic residues. The Type-2 MIT-interacting motif motif lies at 170 to 181 (LELPEVPGEELP). Basic and acidic residues predominate over residues 187–206 (EPVREKERVKKKPEREMVAV).

Belongs to the SNF7 family. As to quaternary structure, probable core component of the endosomal sorting required for transport complex III (ESCRT-III). ESCRT-III components are thought to multimerize to form a flat lattice on the perimeter membrane of the endosome.

The protein resides in the endomembrane system. Its subcellular location is the late endosome membrane. Its function is as follows. Probable core component of the endosomal sorting required for transport complex III (ESCRT-III) which is involved in multivesicular bodies (MVBs) formation and sorting of endosomal cargo proteins into MVBs. MVBs contain intraluminal vesicles (ILVs) that are generated by invagination and scission from the limiting membrane of the endosome and mostly are delivered to lysosomes enabling degradation of membrane proteins, such as stimulated growth factor receptors, lysosomal enzymes and lipids. In the ESCRT-III complex, it probably serves as an acceptor for the ESCRT-II complex on endosomal membranes. The protein is Charged multivesicular body protein 6 (chmp6) of Danio rerio (Zebrafish).